We begin with the raw amino-acid sequence, 646 residues long: Elongation factor 4 (646 aa).

The tr-type G domain maps to Ala42 to Gln227. Residues Asp54 to Thr59 and Asn174 to Asp177 each bind GTP.

The protein belongs to the TRAFAC class translation factor GTPase superfamily. Classic translation factor GTPase family. LepA subfamily.

It localises to the cell membrane. It catalyses the reaction GTP + H2O = GDP + phosphate + H(+). In terms of biological role, required for accurate and efficient protein synthesis under certain stress conditions. May act as a fidelity factor of the translation reaction, by catalyzing a one-codon backward translocation of tRNAs on improperly translocated ribosomes. Back-translocation proceeds from a post-translocation (POST) complex to a pre-translocation (PRE) complex, thus giving elongation factor G a second chance to translocate the tRNAs correctly. Binds to ribosomes in a GTP-dependent manner. In Mycobacterium leprae (strain Br4923), this protein is Elongation factor 4.